A 342-amino-acid polypeptide reads, in one-letter code: MENTIRSLQQEIIDFEITTAADLEAFRLRYTVRKGLIAALFGQLKTVEPAEKPRMGQLLNQLKQTADAKLTEAEERLAGTESKSSSNRIDLTLPGRRYFTGSEHPVQKVLGEMKSIFSAMGFGIATGPELETDQYNFDLLNFPPDHPARDMQDTFFVTSGNPGSDVLLRTHTSPVQIRVMLDQKPPIRVICPGKVYRNEAISSRSYCVFHQLEGLYIDKKVSFADLKATIYSFAKQMFGTDVKLRFRPSFFPFTEPSAEVDVTCYLCGGKGCKVCKKSGWLEIMGCGMVHPNVMRNCGIDPEEWSGYAFGMGVDRTVLLRYKIDDIRLLFENDLRMLKQFTA.

Residue Glu255 participates in Mg(2+) binding.

Belongs to the class-II aminoacyl-tRNA synthetase family. Phe-tRNA synthetase alpha subunit type 1 subfamily. Tetramer of two alpha and two beta subunits. Mg(2+) serves as cofactor.

The protein localises to the cytoplasm. The catalysed reaction is tRNA(Phe) + L-phenylalanine + ATP = L-phenylalanyl-tRNA(Phe) + AMP + diphosphate + H(+). The sequence is that of Phenylalanine--tRNA ligase alpha subunit from Pelodictyon phaeoclathratiforme (strain DSM 5477 / BU-1).